A 673-amino-acid chain; its full sequence is RAS guanyl-releasing protein 4 (673 aa).

2 stretches are compositionally biased toward basic residues: residues 1 to 10 (MNRKDSKRKS) and 20 to 32 (GRGRPRQARRHKT). 2 disordered regions span residues 1–34 (MNRKDSKRKSHQECPVKTGGRGRPRQARRHKTCP) and 162–188 (QSLGDFSSRLSPGGPGPPHPMSSPGLG). The N-terminal Ras-GEF domain occupies 49–172 (GMLNEGGCSE…SLGDFSSRLS (124 aa)). Positions 201-432 (ETGELAEHLT…YELSYAREPR (232 aa)) constitute a Ras-GEF domain. Residues 466 to 501 (HVEQLVESVFKNYDPDGRGTISQEDFERLSGNFPFA) form the EF-hand domain. Residues 540–590 (LHTFQEVTFRKPTFCNSCSGFLWGVTKQGYRCRDCGLCCHRHCRDQVKVEC) form a Phorbol-ester/DAG-type zinc finger. 2 disordered regions span residues 593–618 (RPGAKGDASPPEAPVPPTPVPQASCG) and 638–673 (RHAWTQTESPHPSWEPETVPLPAKASPPTESSKLNS). Positions 603–612 (PEAPVPPTPV) are enriched in pro residues.

This sequence belongs to the RASGRP family.

The protein resides in the cytoplasm. The protein localises to the cell membrane. Its function is as follows. Functions as a cation- and diacylglycerol (DAG)-regulated nucleotide exchange factor activating Ras through the exchange of bound GDP for GTP. In neutrophils, participates in a phospholipase C-activating N-formyl peptide-activated GPCR (G protein-coupled receptor) signaling pathway by promoting Ras-mediated activation of PIK3CG/PI3Kgamma to promote neutrophil functional responses. In CD117(+) dendritic cells and mast cells, participates in an lipopolysaccharide (LPS)-activated signaling pathway that stimulates the production of interferon-gamma and other pro-inflammatory cytokines by natural killer (NK) cells. May function in mast cell differentiation. Does not appear to be required for the development of B-cells, DC-cells, T-cells, or NK-cells. The polypeptide is RAS guanyl-releasing protein 4 (RASGRP4) (Bos taurus (Bovine)).